The following is a 570-amino-acid chain: Urease subunit alpha (570 aa).

Ni(2+) is bound by residues His-137, His-139, and Lys-220. Residue Lys-220 is modified to N6-carboxylysine. His-222 provides a ligand contact to substrate. 2 residues coordinate Ni(2+): His-249 and His-275. His-323 acts as the Proton donor in catalysis. Asp-363 lines the Ni(2+) pocket.

Belongs to the metallo-dependent hydrolases superfamily. Urease alpha subunit family. Heterotrimer of UreA (gamma), UreB (beta) and UreC (alpha) subunits. Three heterotrimers associate to form the active enzyme. Ni cation serves as cofactor. In terms of processing, carboxylation allows a single lysine to coordinate two nickel ions.

It is found in the cytoplasm. It catalyses the reaction urea + 2 H2O + H(+) = hydrogencarbonate + 2 NH4(+). It participates in nitrogen metabolism; urea degradation; CO(2) and NH(3) from urea (urease route): step 1/1. The protein is Urease subunit alpha of Lachnoclostridium phytofermentans (strain ATCC 700394 / DSM 18823 / ISDg) (Clostridium phytofermentans).